Here is a 318-residue protein sequence, read N- to C-terminus: 1-phosphofructokinase (318 aa).

Residues 228 to 233 (SMGTEG) and 259 to 260 (GD) contribute to the ATP site. The active-site Proton acceptor is the Asp-260.

Belongs to the carbohydrate kinase PfkB family.

It catalyses the reaction beta-D-fructose 1-phosphate + ATP = beta-D-fructose 1,6-bisphosphate + ADP + H(+). In terms of biological role, catalyzes the ATP-dependent phosphorylation of fructose-l-phosphate to fructose-l,6-bisphosphate. The sequence is that of 1-phosphofructokinase from Xanthomonas campestris pv. campestris (strain ATCC 33913 / DSM 3586 / NCPPB 528 / LMG 568 / P 25).